The chain runs to 490 residues: MTENNEHLALWGGRFTSGPSPELARLSKSTQFDWRLADDDIAGSRAHARALGRAGLLTADELQRMEDALDTLQRHVDDGSFAPIEDDEDEATALERGLIDIAGDELGGKLRAGRSRNDQIACLIRMWLRRHSRVIAGLLLDLVNALIEQSEKAGRTVMPGRTHMQHAQPVLLAHQLMAHAWPLIRDVQRLIDWDKRINASPYGSGALAGNTLGLDPEAVARELGFSRVTDNSIDGTAARDLVAEFAFVAAMTGVDISRLSEEIIIWNTQEFAFVKLDDGYSTGSSIMPQKKNPDIAELARGKSGRLIGDLTGLLATLKGLPTAYARDLQEDKEAVFDQVDTLEVLLPAFTGMVRTMHFDGDRLEEEAPTGFALATDIAEWLVKNGVPFRHAHELSGACVKLAEGRGQELWDLTDNDFIETFAAFLPADKAPGVREVLSSHGSVDSRNGKGGTAYGRVREQIADAKAEVEELKLFPASTSDGSAYKAPGTF.

It belongs to the lyase 1 family. Argininosuccinate lyase subfamily.

It localises to the cytoplasm. The catalysed reaction is 2-(N(omega)-L-arginino)succinate = fumarate + L-arginine. Its pathway is amino-acid biosynthesis; L-arginine biosynthesis; L-arginine from L-ornithine and carbamoyl phosphate: step 3/3. This chain is Argininosuccinate lyase, found in Bifidobacterium longum (strain DJO10A).